Reading from the N-terminus, the 489-residue chain is Alpha-amylase (489 aa).

Residues 1–16 (HFKPILVLCLATLALG) form the signal peptide. Residues Cys-44 and Cys-102 are joined by a disulfide bond. Residues Asn-116, Arg-164, and Asp-173 each contribute to the Ca(2+) site. The cysteines at positions 152 and 166 are disulfide-linked. A chloride-binding site is contributed by Arg-201. Residue Asp-203 is the Nucleophile of the active site. Ca(2+) is bound at residue His-207. Glu-240 acts as the Proton donor in catalysis. Chloride contacts are provided by Asn-303 and Arg-339. Disulfide bonds link Cys-372–Cys-378 and Cys-443–Cys-455.

This sequence belongs to the glycosyl hydrolase 13 family. As to quaternary structure, monomer. It depends on Ca(2+) as a cofactor. The cofactor is chloride.

The enzyme catalyses Endohydrolysis of (1-&gt;4)-alpha-D-glucosidic linkages in polysaccharides containing three or more (1-&gt;4)-alpha-linked D-glucose units.. This is Alpha-amylase from Tribolium castaneum (Red flour beetle).